Consider the following 257-residue polypeptide: Type III pantothenate kinase (257 aa).

Position 6-13 (6-13) interacts with ATP; it reads DAGNTNIV. Substrate contacts are provided by residues Tyr100 and 107 to 110; that span reads GADR. Asp109 serves as the catalytic Proton acceptor. Asp129 contributes to the K(+) binding site. Thr132 is a binding site for ATP. Thr184 contributes to the substrate binding site.

The protein belongs to the type III pantothenate kinase family. As to quaternary structure, homodimer. Requires NH4(+) as cofactor. K(+) serves as cofactor.

The protein resides in the cytoplasm. It carries out the reaction (R)-pantothenate + ATP = (R)-4'-phosphopantothenate + ADP + H(+). It participates in cofactor biosynthesis; coenzyme A biosynthesis; CoA from (R)-pantothenate: step 1/5. Its function is as follows. Catalyzes the phosphorylation of pantothenate (Pan), the first step in CoA biosynthesis. This is Type III pantothenate kinase from Clostridium botulinum (strain Alaska E43 / Type E3).